Here is a 160-residue protein sequence, read N- to C-terminus: Nucleotide-binding protein ASA_3207 (160 aa).

It belongs to the YajQ family.

In terms of biological role, nucleotide-binding protein. The protein is Nucleotide-binding protein ASA_3207 of Aeromonas salmonicida (strain A449).